We begin with the raw amino-acid sequence, 122 residues long: Large ribosomal subunit protein uL14 (122 aa).

Belongs to the universal ribosomal protein uL14 family. As to quaternary structure, part of the 50S ribosomal subunit. Forms a cluster with proteins L3 and L19. In the 70S ribosome, L14 and L19 interact and together make contacts with the 16S rRNA in bridges B5 and B8.

Functionally, binds to 23S rRNA. Forms part of two intersubunit bridges in the 70S ribosome. This chain is Large ribosomal subunit protein uL14, found in Xylella fastidiosa (strain M23).